Consider the following 405-residue polypeptide: Corticosteroid-binding globulin (405 aa).

Positions 1–22 (MPLLLYTCLLWLPTSGLWTVQA) are cleaved as a signal peptide. Asparagine 31, asparagine 96, and asparagine 176 each carry an N-linked (GlcNAc...) asparagine glycan. Glutamine 254 provides a ligand contact to cortisol. The N-linked (GlcNAc...) asparagine glycan is linked to asparagine 260. Residue asparagine 286 coordinates cortisol. Residues asparagine 330 and asparagine 369 are each glycosylated (N-linked (GlcNAc...) asparagine). Cortisol is bound by residues histidine 390 and tryptophan 393.

This sequence belongs to the serpin family. In terms of processing, N-glycosylated; binds 5 oligosaccharide chains. Post-translationally, glycosylation in position Asn-260 is needed for steroid binding. As to expression, plasma; synthesized in liver. Has also been identified in a number of glycocorticoid responsive cells.

Its subcellular location is the secreted. Its function is as follows. Major transport protein for glucocorticoids and progestins in the blood of almost all vertebrate species. The sequence is that of Corticosteroid-binding globulin (SERPINA6) from Homo sapiens (Human).